A 158-amino-acid chain; its full sequence is 6,7-dimethyl-8-ribityllumazine synthase (158 aa).

5-amino-6-(D-ribitylamino)uracil-binding positions include Phe-22, 57–59 (AVE), and 81–83 (AVI). Residue 86-87 (GT) participates in (2S)-2-hydroxy-3-oxobutyl phosphate binding. The active-site Proton donor is His-89. Phe-114 is a binding site for 5-amino-6-(D-ribitylamino)uracil. A (2S)-2-hydroxy-3-oxobutyl phosphate-binding site is contributed by Arg-128.

This sequence belongs to the DMRL synthase family. In terms of assembly, forms an icosahedral capsid composed of 60 subunits, arranged as a dodecamer of pentamers.

The enzyme catalyses (2S)-2-hydroxy-3-oxobutyl phosphate + 5-amino-6-(D-ribitylamino)uracil = 6,7-dimethyl-8-(1-D-ribityl)lumazine + phosphate + 2 H2O + H(+). It participates in cofactor biosynthesis; riboflavin biosynthesis; riboflavin from 2-hydroxy-3-oxobutyl phosphate and 5-amino-6-(D-ribitylamino)uracil: step 1/2. Functionally, catalyzes the formation of 6,7-dimethyl-8-ribityllumazine by condensation of 5-amino-6-(D-ribitylamino)uracil with 3,4-dihydroxy-2-butanone 4-phosphate. This is the penultimate step in the biosynthesis of riboflavin. This chain is 6,7-dimethyl-8-ribityllumazine synthase, found in Shewanella halifaxensis (strain HAW-EB4).